A 695-amino-acid chain; its full sequence is MDLLRLSRLFSGPRPIGLSVLQHLDLVGSTRWTGGREGPARLRAAFCGSSSPLPLGSGNQKEMSSLCSDSSKLSTVAPQEEAEEESFGSLSGKFSSRRIFHKSTAQLYNLQLKEQGGEEEELEPRPWRGRRNTQYWYFFQCKRLIKEGKLAEALDLFERQMLKEERLQPLECNYTVLIGGCGRVGYLKKAFRLFNDMKKRDLEPSDATYTALFNVCAESPWKDSALQSALKLRQQLQARNFQLNLKTYHALLKVAAKCADLRLCLDVFKEIIQRGHAVTEETFCFLLVGCIQDKKTGFRQAMQVWRQMLSLGIKPSRHGYNLLLEAARDCGLGDPEVASRLLLTSQEETILLPPPKGRHMAGRKVQAKTVHGVSLRHVEALERQLFLEPSQKLEGPPALPEARVTSRTQPEVETTAEPGHTVALTPLASKPTHLELEVSLLSLGTLSPAVVSFGTVATPADRLALMGGLEGFLGKMTEHGLQPDIKTLTLLAEVVEPGSTAESSLLSVLDRHRVEADVTFFNTLIRKKSKLGDLEGAKALLPILAKKGIVPNLRTFCNLAIGCHRPRDGMQLLADMKKSQVSPNIHIYSTLINAALKKLDYTYLISILKDMRQNSVPVNEVVVRQLEFAAEYPPTFDRYKGKNTYLEKIDGFRAYYKQWLKAMPAEEAPHPWQEFQNKPVGDQDTTDKAGGLRDG.

PPR repeat units follow at residues 133-169 (TQYW…RLQP), 170-204 (LECN…DLEP), 205-243 (SDAT…NFQL), 244-278 (NLKT…GHAV), 279-315 (TEET…GIKP), and 316-352 (SRHG…TILL). A disordered region spans residues 391-416 (QKLEGPPALPEARVTSRTQPEVETTA). PPR repeat units follow at residues 470–485 (EGFL…QPDI), 517–551 (DVTF…GIVP), 552–583 (NLRT…QVSP), and 584–618 (NIHI…SVPV). The interval 672–695 (WQEFQNKPVGDQDTTDKAGGLRDG) is disordered. A compositionally biased stretch (basic and acidic residues) spans 685–695 (TTDKAGGLRDG).

This sequence belongs to the PTCD1 family. As to quaternary structure, associates with mitochondrial leucine tRNAs. Interacts with ELAC2.

It is found in the mitochondrion. The protein localises to the mitochondrion matrix. Functionally, mitochondrial protein implicated in negative regulation of leucine tRNA levels, as well as negative regulation of mitochondria-encoded proteins and COX activity. Also affects the 3'-processing of mitochondrial tRNAs. The polypeptide is Pentatricopeptide repeat-containing protein 1, mitochondrial (Ptcd1) (Mus musculus (Mouse)).